The chain runs to 342 residues: MDLTERHKRILKALVDEFIQENRPVGSKTLFDKHDIGLSPASIRTVLKDLEDFGYLASKHTSGGRIPTERGYRFYVDSLVILYELTLKEKQRIQQEYLKMQFKLDQILKATASVLSSLSNAAGIVIGPAKNLDTLKHIELIHVRGDEILMILVMRSGTVLHRNIFVDQNYSQEALYQVSKYLNDNLKGYDIYEIQNVIIPKLMIRKDGPEDFIRIADLISSAMTPDNSEVTLYIDGFKNLYANFRDEEQQLSQVLSLLDDQGFLKAFFSEYIDQDGVFTIIGKDGDRSMSGVSIITSNYKMGEKKIGALGIIGPQRMDYNRALPLVDFTSKLVSEMVTRISK.

Belongs to the HrcA family.

Its function is as follows. Negative regulator of class I heat shock genes (grpE-dnaK-dnaJ and groELS operons). Prevents heat-shock induction of these operons. The sequence is that of Heat-inducible transcription repressor HrcA from Leptospira interrogans serogroup Icterohaemorrhagiae serovar copenhageni (strain Fiocruz L1-130).